A 329-amino-acid polypeptide reads, in one-letter code: Meiotic drive suppressor wtf21 (329 aa).

Residues 1-68 (MKNNYTSLKS…RENNPSRSTD (68 aa)) form a disordered region. A compositionally biased stretch (basic and acidic residues) spans 19-30 (KTDHEIDLEKGP). A run of 5 helical transmembrane segments spans residues 73–95 (FLIK…ICYL), 110–132 (WTLF…YFYE), 165–182 (IIIW…FVYI), 192–214 (ALIC…VCIP), and 290–312 (GIAF…IRGA).

This sequence belongs to the WTF family. Homomer. Interacts with other proteins that exhibit high sequence similarity.

The protein localises to the spore membrane. It localises to the vacuole membrane. Acts as a suppressor component of the dual wtf meiotic drive system, and can suppress but not confer meiotic drive by compatible poisons. Wtf meiotic drive systems promote unequal transmission of alleles from the parental zygote to progeny spores by encoding a poison and an antidote from the same locus; the poison is trans-acting and forms toxic aggregates in all spores within an ascus, wherease the antidote is spore-specific and targets aggregates for degradation by the vacuole. Meiotic drive by wtf systems therefore lead to poisoning of all progeny that do not inherit the dual poison/antidote allele, or express a compatible antidote. The sequence is that of Meiotic drive suppressor wtf21 from Schizosaccharomyces pombe (strain 972 / ATCC 24843) (Fission yeast).